The chain runs to 203 residues: Peptidyl-tRNA hydrolase (203 aa).

Tyr26 is a tRNA binding site. Catalysis depends on His31, which acts as the Proton acceptor. Positions 82, 84, and 130 each coordinate tRNA.

This sequence belongs to the PTH family. As to quaternary structure, monomer.

Its subcellular location is the cytoplasm. The catalysed reaction is an N-acyl-L-alpha-aminoacyl-tRNA + H2O = an N-acyl-L-amino acid + a tRNA + H(+). Hydrolyzes ribosome-free peptidyl-tRNAs (with 1 or more amino acids incorporated), which drop off the ribosome during protein synthesis, or as a result of ribosome stalling. In terms of biological role, catalyzes the release of premature peptidyl moieties from peptidyl-tRNA molecules trapped in stalled 50S ribosomal subunits, and thus maintains levels of free tRNAs and 50S ribosomes. The sequence is that of Peptidyl-tRNA hydrolase from Streptomyces avermitilis (strain ATCC 31267 / DSM 46492 / JCM 5070 / NBRC 14893 / NCIMB 12804 / NRRL 8165 / MA-4680).